Here is a 195-residue protein sequence, read N- to C-terminus: Probable prefoldin subunit 3 (195 aa).

Belongs to the prefoldin subunit alpha family. Heterohexamer of two PFD-alpha type and four PFD-beta type subunits.

Binds specifically to cytosolic chaperonin (c-CPN) and transfers target proteins to it. Binds to nascent polypeptide chain and promotes folding in an environment in which there are many competing pathways for nonnative proteins. In Dictyostelium discoideum (Social amoeba), this protein is Probable prefoldin subunit 3 (pfdn3).